A 212-amino-acid polypeptide reads, in one-letter code: MSALHKLKAYFGMVPADEIDEVYDDEVAYRDRYADPDTSYDAPSDRVGGRRRVAGGVRGGFQPEAEEDGGDYGEEFREPARSRRQWAPPETPVRAPLGSDAHREQVSRLRAVTDTGSHFNLSKITTLHPRSYSEARTIGEQYRDGTPVIMNLTEMDEADAKRLVDFAAGLAFALRGSIEKVTNRVFLLSPPNVDVAAEDKRRLAEGAFFNYG.

The disordered stretch occupies residues Arg32–Glu104. The segment covering Glu64–Gly73 has biased composition (acidic residues).

It belongs to the SepF family. As to quaternary structure, homodimer. Interacts with FtsZ.

It is found in the cytoplasm. Its function is as follows. Cell division protein that is part of the divisome complex and is recruited early to the Z-ring. Probably stimulates Z-ring formation, perhaps through the cross-linking of FtsZ protofilaments. Its function overlaps with FtsA. The polypeptide is Cell division protein SepF (Saccharopolyspora erythraea (strain ATCC 11635 / DSM 40517 / JCM 4748 / NBRC 13426 / NCIMB 8594 / NRRL 2338)).